We begin with the raw amino-acid sequence, 178 residues long: FXYD domain-containing ion transport regulator 5 (178 aa).

Residues 1–21 (MSLSSRLCLLTIVALILPSRG) form the signal peptide. Polar residues predominate over residues 21-59 (GQTPKKPTSIFTADQTSATTRDNVPDPDQTSPGVQTTPL). Positions 21 to 130 (GQTPKKPTSI…SYIEHPLDSN (110 aa)) are disordered. The Extracellular segment spans residues 22–145 (QTPKKPTSIF…YYDDTTLRKR (124 aa)). The span at 67–79 (TGSQTAAQTETQQ) shows a compositional bias: low complexity. The span at 80 to 100 (LTKMATSNPVSDPGPHTSSKK) shows a compositional bias: polar residues. The helical transmembrane segment at 146 to 166 (GLLVAAVLFITGIIILTSGKC) threads the bilayer. Residues 167 to 178 (RQLSQFCLNRHR) are Cytoplasmic-facing.

This sequence belongs to the FXYD family. As to quaternary structure, regulatory subunit of the sodium/potassium-transporting ATPase which is composed of a catalytic alpha subunit, a non-catalytic beta subunit and an additional regulatory subunit. The regulatory subunit, a member of the FXYD protein family, modulates the enzymatic activity in a tissue- and isoform-specific way by changing affinities of the Na+/K+-ATPase toward Na(+), K(+) or ATP. Post-translationally, glycosylated. As to expression, expressed mainly in epithelial tissue, such as lung, intestine and kidney. Not detected in brain, liver, muscle, and heart.

It is found in the cell membrane. Its subcellular location is the basolateral cell membrane. Functionally, associates with and regulates the activity of the sodium/potassium-transporting ATPase (NKA) which catalyzes the hydrolysis of ATP coupled with the exchange of Na(+) and K(+) ions across the plasma membrane. May increase NKA activity by increasing the apparent affinity for Na(+). Involved in down-regulation of E-cadherin which results in reduced cell adhesion. Promotes metastasis. The sequence is that of FXYD domain-containing ion transport regulator 5 (Fxyd5) from Mus musculus (Mouse).